A 241-amino-acid polypeptide reads, in one-letter code: uncharacterized protein (241 aa).

It localises to the cytoplasm. The protein localises to the nucleus. This is an uncharacterized protein from Schizosaccharomyces pombe (strain 972 / ATCC 24843) (Fission yeast).